The following is a 130-amino-acid chain: Small ribosomal subunit protein uS8 (130 aa).

The protein belongs to the universal ribosomal protein uS8 family. In terms of assembly, part of the 30S ribosomal subunit. Contacts proteins S5 and S12.

Its function is as follows. One of the primary rRNA binding proteins, it binds directly to 16S rRNA central domain where it helps coordinate assembly of the platform of the 30S subunit. This chain is Small ribosomal subunit protein uS8, found in Shewanella baltica (strain OS223).